Consider the following 461-residue polypeptide: Putative long chain fatty acid-CoA ligase VraA (461 aa).

It belongs to the ATP-dependent AMP-binding enzyme family.

The chain is Putative long chain fatty acid-CoA ligase VraA (vraA) from Staphylococcus haemolyticus (strain JCSC1435).